Here is a 96-residue protein sequence, read N- to C-terminus: Protein Vpr (96 aa).

The tract at residues 1 to 42 is homooligomerization; it reads MEQAPEDQGPQREPYNEWALELLEELKQEAVRHFPRPWLHNL. Phosphoserine; by host occurs at positions 79, 94, and 96.

It belongs to the HIV-1 VPR protein family. As to quaternary structure, homooligomer, may form homodimer. Interacts with p6-gag region of the Pr55 Gag precursor protein through a (Leu-X-X)4 motif near the C-terminus of the P6gag protein. Interacts with host UNG. May interact with host RAD23A/HHR23A. Interacts with host VPRBP/DCAF1, leading to hijack the CUL4A-RBX1-DDB1-DCAF1/VPRBP complex, mediating ubiquitination of host proteins such as TERT and ZGPAT and arrest of the cell cycle in G2 phase. In terms of processing, phosphorylated on several residues by host. These phosphorylations regulate VPR activity for the nuclear import of the HIV-1 pre-integration complex.

The protein localises to the virion. The protein resides in the host nucleus. It is found in the host extracellular space. During virus replication, may deplete host UNG protein, and incude G2-M cell cycle arrest. Acts by targeting specific host proteins for degradation by the 26S proteasome, through association with the cellular CUL4A-DDB1 E3 ligase complex by direct interaction with host VPRPB/DCAF-1. Cell cycle arrest reportedly occurs within hours of infection and is not blocked by antiviral agents, suggesting that it is initiated by the VPR carried into the virion. Additionally, VPR induces apoptosis in a cell cycle dependent manner suggesting that these two effects are mechanistically linked. Detected in the serum and cerebrospinal fluid of AIDS patient, VPR may also induce cell death to bystander cells. Functionally, during virus entry, plays a role in the transport of the viral pre-integration (PIC) complex to the host nucleus. This function is crucial for viral infection of non-dividing macrophages. May act directly at the nuclear pore complex, by binding nucleoporins phenylalanine-glycine (FG)-repeat regions. The chain is Protein Vpr from Homo sapiens (Human).